Reading from the N-terminus, the 370-residue chain is N-acyl-L-amino acid amidohydrolase (370 aa).

Belongs to the peptidase M20 family. In terms of assembly, homotetramer. Requires Co(2+) as cofactor.

The catalysed reaction is an N-acyl-L-amino acid + H2O = an L-alpha-amino acid + a carboxylate. It carries out the reaction an N-acetyl-L-cysteine-S-conjugate + H2O = an S-substituted L-cysteine + acetate. In terms of biological role, hydrolyzes most efficiently N-acetyl derivatives of aromatic amino acids but is also active on other amino acids. L-stereospecific. The chain is N-acyl-L-amino acid amidohydrolase (amaA) from Geobacillus stearothermophilus (Bacillus stearothermophilus).